The following is a 181-amino-acid chain: MRLVLLGPPGAGKGTQAAILSEKFGVPHISTGDLFRANIGQATALGVEAKKYIDAGELVPSSITNDMVKARVAEPDAANGFLLDGFPRSVEQAQALEGILKDLDTRLDGVLSFVVDEDIVVERMLARGRADDTEDVIRNRLRVYRDETSPLFDYYKDSIVSVDAIGEVEEVNARALAALGK.

An ATP-binding site is contributed by 10–15 (GAGKGT). Positions 30–59 (STGDLFRANIGQATALGVEAKKYIDAGELV) are NMP. AMP is bound by residues Thr-31, Arg-36, 57–59 (ELV), 85–88 (GFPR), and Gln-92. An LID region spans residues 126–132 (ARGRADD). An ATP-binding site is contributed by Arg-127. The AMP site is built by Arg-129 and Arg-140. ATP is bound at residue Gly-166.

Belongs to the adenylate kinase family. As to quaternary structure, monomer.

It is found in the cytoplasm. The enzyme catalyses AMP + ATP = 2 ADP. Its pathway is purine metabolism; AMP biosynthesis via salvage pathway; AMP from ADP: step 1/1. Its function is as follows. Catalyzes the reversible transfer of the terminal phosphate group between ATP and AMP. Plays an important role in cellular energy homeostasis and in adenine nucleotide metabolism. The protein is Adenylate kinase of Rhodococcus erythropolis (strain PR4 / NBRC 100887).